Consider the following 873-residue polypeptide: K(+)/H(+) antiporter 1 (873 aa).

At Met-1–Leu-23 the chain is on the extracellular side. A helical transmembrane segment spans residues Thr-24–Phe-44. Topologically, residues Ser-45–Lys-51 are cytoplasmic. A helical transmembrane segment spans residues Val-52–Asn-72. Over Tyr-73–Ser-82 the chain is Extracellular. The chain crosses the membrane as a helical span at residues Ile-83–Leu-103. Topologically, residues Glu-104–Lys-116 are cytoplasmic. The helical transmembrane segment at Ala-117–Ile-137 threads the bilayer. Residues Pro-138–Lys-154 lie on the Extracellular side of the membrane. A helical membrane pass occupies residues Phe-155 to Cys-175. Topologically, residues Arg-176–Ala-188 are cytoplasmic. A helical transmembrane segment spans residues Gly-189 to Leu-209. Residues Ser-210–Pro-220 are Extracellular-facing. A helical membrane pass occupies residues Val-221 to Leu-241. Over Lys-242–Cys-267 the chain is Cytoplasmic. A helical membrane pass occupies residues Ile-268 to Phe-288. Residues Gly-289–Asn-316 are Extracellular-facing. A helical transmembrane segment spans residues Ile-317–Asn-337. Residues Glu-338–Asp-341 are Cytoplasmic-facing. Residues Trp-342–Leu-362 traverse the membrane as a helical segment. Residues Thr-363 to Thr-375 are Extracellular-facing. A helical membrane pass occupies residues Ala-376 to Leu-396. Over Asn-397 to Lys-404 the chain is Cytoplasmic. A helical transmembrane segment spans residues Ile-405–Gln-425. At Leu-426–Leu-726 the chain is on the extracellular side. Position 557 is a phosphoserine (Ser-557). A Glycyl lysine isopeptide (Lys-Gly) (interchain with G-Cter in ubiquitin) cross-link involves residue Lys-562. The helical transmembrane segment at Leu-727–Ile-747 threads the bilayer. The Cytoplasmic portion of the chain corresponds to Cys-748 to Glu-873.

The protein belongs to the monovalent cation:proton antiporter 2 (CPA2) transporter (TC 2.A.37) family.

It localises to the membrane. Its function is as follows. Potassium-proton antiport. The chain is K(+)/H(+) antiporter 1 (KHA1) from Saccharomyces cerevisiae (strain ATCC 204508 / S288c) (Baker's yeast).